Consider the following 436-residue polypeptide: UBX domain-containing protein 7 (436 aa).

Lys19 is covalently cross-linked (Glycyl lysine isopeptide (Lys-Gly) (interchain with G-Cter in ubiquitin)). The disordered stretch occupies residues 115–141; the sequence is AGESSSRETNPGLAREEKSSRDVHRKN. Residues 212 to 290 form the UBX domain; it reads LHSSKCVLQI…ELTPRSALLL (79 aa). The span at 325-346 shows a compositional bias: basic and acidic residues; that stretch reads DKDPEVTSQREETSKPNRHEVR. Disordered regions lie at residues 325–357 and 371–436; these read DKDP…AASS and SSAH…EDKK. Positions 347–357 are enriched in low complexity; the sequence is SSTPLSGAASS. The segment covering 371-408 has biased composition (polar residues); the sequence is SSAHASPMLTPSGTRYPSETNLTTSRSVSPNVFQFVNN. Phosphoserine is present on Ser388. Over residues 426-436 the composition is skewed to basic and acidic residues; it reads HLEKKKDEDKK.

As to quaternary structure, interacts with CDC48.

Its subcellular location is the endoplasmic reticulum. Its function is as follows. Involved in CDC48-dependent protein degradation through the ubiquitin/proteasome pathway. The protein is UBX domain-containing protein 7 (UBX7) of Saccharomyces cerevisiae (strain ATCC 204508 / S288c) (Baker's yeast).